The chain runs to 432 residues: Transcriptional adapter 3 (432 aa).

A coiled-coil region spans residues 40-69; the sequence is IEELDTLQLELETLLSSASRRLRVLEAETQ. Disordered regions lie at residues 88–127 and 275–313; these read KEHELGTPIKHSKPKKQKLDGKGSHASGPGPGRPKSRNMQ and SPVEDSPIPEISGKESGTDGASTSPRSQNKPFSAPHTKS. A compositionally biased stretch (polar residues) spans 293–305; the sequence is DGASTSPRSQNKP. Residues 367-407 are a coiled coil; it reads LLRLAKEEMNRQELRQRVRMADNEVMDAFRKIMAARQKKRT.

This sequence belongs to the NGG1 family.

It is found in the nucleus. Functions as a component of the PCAF complex. The PCAF complex is capable of efficiently acetylating histones in a nucleosomal context. The polypeptide is Transcriptional adapter 3 (tada3) (Xenopus tropicalis (Western clawed frog)).